A 198-amino-acid polypeptide reads, in one-letter code: Pyridoxal 5'-phosphate synthase subunit PdxT (198 aa).

49–51 (GES) serves as a coordination point for L-glutamine. Residue Cys81 is the Nucleophile of the active site. L-glutamine-binding positions include Arg112 and 140–141 (IR). Catalysis depends on charge relay system residues His176 and Glu178.

This sequence belongs to the glutaminase PdxT/SNO family. In the presence of PdxS, forms a dodecamer of heterodimers. Only shows activity in the heterodimer.

It carries out the reaction aldehydo-D-ribose 5-phosphate + D-glyceraldehyde 3-phosphate + L-glutamine = pyridoxal 5'-phosphate + L-glutamate + phosphate + 3 H2O + H(+). It catalyses the reaction L-glutamine + H2O = L-glutamate + NH4(+). Its pathway is cofactor biosynthesis; pyridoxal 5'-phosphate biosynthesis. In terms of biological role, catalyzes the hydrolysis of glutamine to glutamate and ammonia as part of the biosynthesis of pyridoxal 5'-phosphate. The resulting ammonia molecule is channeled to the active site of PdxS. This chain is Pyridoxal 5'-phosphate synthase subunit PdxT, found in Methanocella arvoryzae (strain DSM 22066 / NBRC 105507 / MRE50).